Reading from the N-terminus, the 42-residue chain is Potassium channel toxin gamma-KTx 1.6 (42 aa).

4 disulfides stabilise this stretch: Cys-5–Cys-23, Cys-11–Cys-34, Cys-20–Cys-39, and Cys-24–Cys-41.

Belongs to the ergtoxin family. Gamma-KTx 1 subfamily. Expressed by the venom gland.

Its subcellular location is the secreted. In terms of biological role, blocks Kv11/ERG potassium channels. The protein is Potassium channel toxin gamma-KTx 1.6 of Centruroides exilicauda (Bark scorpion).